The following is a 511-amino-acid chain: Cytochrome P450 93B2 (511 aa).

A helical membrane pass occupies residues 4–24 (LQLIFLLFFFPTLLFLYCLPY). C447 lines the heme pocket.

The protein belongs to the cytochrome P450 family. It depends on heme as a cofactor.

It is found in the membrane. It carries out the reaction a flavanone + reduced [NADPH--hemoprotein reductase] + O2 = a flavone + oxidized [NADPH--hemoprotein reductase] + 2 H2O + H(+). The protein operates within secondary metabolite biosynthesis; flavonoid biosynthesis. Functions as a flavone synthase II (FNSII) that catalyzes the direct conversion of flavanones to flavones. In vitro, can convert liquiritigenin, naringenin and eriodictyol to 7,4'-dihydroxyflavone, apigenin and luteolin, respectively. The chain is Cytochrome P450 93B2 from Gerbera hybrida (Daisy).